Here is a 434-residue protein sequence, read N- to C-terminus: MIDINELRADPDTYRASQTARGADAGLVDRILEADSRRRSAITDFESLRAEQNAFGKKVARAQGEEKQQLLAQVKQLAADVKAAQAAADEAQATQQQLVTQFPNLIVEGIPAGGEDDFVQLRTEGTPRDFAAEGFEPRDHLELGELLDGIDMERGAKVSGSRFYFLKRDVARLETALLMAAQDLALDNGFIPMTTPNLVRPGIMNGTGFDVEHDDEIYRVGKDDLYLVGTSEVALAGYHSDEILDLSGGPLRYAGWSSCYRREAGSAGKDTRGIIRVHQFNKLEMFVYCHPEDAAAEHERLLAWEEQMLQACGLAYRVIDTAAGDLGTSAARKFDCEAWIPTQGKYRELTSTSNCTTYQARRLNIRERLPETTDAHGKVKKGGTRAVATLNGTLATTRWLVALLETHQQADGSVTVPELLRPYLRGQEVLRPVA.

230-232 (TSE) contributes to the L-serine binding site. Residues 261–263 (RRE) and valine 277 each bind ATP. Glutamate 284 is an L-serine binding site. 348-351 (ELTS) is a binding site for ATP. Residue threonine 393 coordinates L-serine.

It belongs to the class-II aminoacyl-tRNA synthetase family. Type-1 seryl-tRNA synthetase subfamily. Homodimer. The tRNA molecule binds across the dimer.

The protein resides in the cytoplasm. The enzyme catalyses tRNA(Ser) + L-serine + ATP = L-seryl-tRNA(Ser) + AMP + diphosphate + H(+). The catalysed reaction is tRNA(Sec) + L-serine + ATP = L-seryl-tRNA(Sec) + AMP + diphosphate + H(+). Its pathway is aminoacyl-tRNA biosynthesis; selenocysteinyl-tRNA(Sec) biosynthesis; L-seryl-tRNA(Sec) from L-serine and tRNA(Sec): step 1/1. Its function is as follows. Catalyzes the attachment of serine to tRNA(Ser). Is also able to aminoacylate tRNA(Sec) with serine, to form the misacylated tRNA L-seryl-tRNA(Sec), which will be further converted into selenocysteinyl-tRNA(Sec). The polypeptide is Serine--tRNA ligase (Kocuria rhizophila (strain ATCC 9341 / DSM 348 / NBRC 103217 / DC2201)).